The following is a 96-amino-acid chain: Prokineticin Bm8-d (96 aa).

The signal sequence occupies residues 1-19; sequence MKCFAQIVVLLLVIAFSHG. Intrachain disulfides connect Cys-26-Cys-38, Cys-32-Cys-50, Cys-37-Cys-78, Cys-60-Cys-86, and Cys-80-Cys-95.

Belongs to the AVIT (prokineticin) family. As to expression, expressed by the skin glands.

Its subcellular location is the secreted. Its function is as follows. Potent agonist for both PKR1/PROKR1 and PKR2/PROKR2, and inducer of a potent and long-lasting hyperalgesia. Also potentiates capsaicin-induced TRPV1 current, when tested on DRG neurons. At subnanomolar concentrations, this protein both induces potent chemotaxis of macrophages and stimulates LPS-induced production of the pro-inflammatory cytokines IL-1 and IL-12. In vivo, potently stimulates the contraction of the guinea-pig gastrointestinal (GI) smooth muscle (nanomolar concentration). This is Prokineticin Bm8-d from Bombina maxima (Giant fire-bellied toad).